Reading from the N-terminus, the 1018-residue chain is Contactin-1 (1018 aa).

Residues 1-20 (MKMWLLVSHLVIISITTCLA) form the signal peptide. Ig-like C2-type domains are found at residues 41–131 (PIFE…ATLS), 137–223 (PFPP…KSVF), 241–326 (PADI…ARIY), 331–407 (PEWV…AELK), 413–500 (PTFE…GTLV), and 504–601 (PTRI…LVVR). Disulfide bonds link Cys-65–Cys-114 and Cys-158–Cys-211. Asn-208 and Asn-258 each carry an N-linked (GlcNAc...) asparagine glycan. Cys-263 and Cys-310 form a disulfide bridge. Residue Asn-338 is glycosylated (N-linked (GlcNAc...) asparagine). 2 disulfide bridges follow: Cys-352-Cys-391 and Cys-436-Cys-484. Residues Asn-457 and Asn-473 are each glycosylated (N-linked (GlcNAc...) asparagine). Asn-494 carries N-linked (GlcNAc...) (complex) asparagine glycosylation. An N-linked (GlcNAc...) asparagine glycan is attached at Asn-521. Cys-526 and Cys-583 form a disulfide bridge. Asn-591 carries N-linked (GlcNAc...) asparagine glycosylation. Fibronectin type-III domains follow at residues 606 to 704 (PPGG…TDGA), 709 to 806 (APSD…SAQD), 811 to 906 (APTE…APPS), and 907 to 1000 (QPPR…TLSP). The tract at residues 693 to 717 (SIPSNRIKTDGAAPNVAPSDVGGGG) is disordered. N-linked (GlcNAc...) asparagine glycosylation is present at Asn-933. Ser-993 carries the GPI-anchor amidated serine lipid modification. The propeptide at 994–1018 (GAPTLSPSLLGLLLPAFGILVYLEF) is removed in mature form.

Belongs to the immunoglobulin superfamily. Contactin family. As to quaternary structure, monomer. Interacts with CNTNAP1 in cis form. Binds to the carbonic-anhydrase like domain of PTPRZ1. Interacts with NOTCH1 and TNR. Detected in a complex with NRCAM and PTPRB. Interacts with TASOR. As to expression, strongly expressed in brain and in neuroblastoma and retinoblastoma cell lines. Lower levels of expression in lung, pancreas, kidney and skeletal muscle.

It is found in the cell membrane. In terms of biological role, contactins mediate cell surface interactions during nervous system development. Involved in the formation of paranodal axo-glial junctions in myelinated peripheral nerves and in the signaling between axons and myelinating glial cells via its association with CNTNAP1. Participates in oligodendrocytes generation by acting as a ligand of NOTCH1. Its association with NOTCH1 promotes NOTCH1 activation through the released notch intracellular domain (NICD) and subsequent translocation to the nucleus. Interaction with TNR induces a repulsion of neurons and an inhibition of neurite outgrowth. The protein is Contactin-1 (CNTN1) of Homo sapiens (Human).